Here is a 428-residue protein sequence, read N- to C-terminus: 3-phosphoshikimate 1-carboxyvinyltransferase (428 aa).

K20, S21, and R25 together coordinate 3-phosphoshikimate. Residue K20 participates in phosphoenolpyruvate binding. Residues G92 and R120 each contribute to the phosphoenolpyruvate site. Residues S166, Q168, D314, and K341 each contribute to the 3-phosphoshikimate site. Q168 serves as a coordination point for phosphoenolpyruvate. The Proton acceptor role is filled by D314. Phosphoenolpyruvate-binding residues include R345 and R387.

Belongs to the EPSP synthase family. In terms of assembly, monomer.

The protein resides in the cytoplasm. It catalyses the reaction 3-phosphoshikimate + phosphoenolpyruvate = 5-O-(1-carboxyvinyl)-3-phosphoshikimate + phosphate. The protein operates within metabolic intermediate biosynthesis; chorismate biosynthesis; chorismate from D-erythrose 4-phosphate and phosphoenolpyruvate: step 6/7. Its function is as follows. Catalyzes the transfer of the enolpyruvyl moiety of phosphoenolpyruvate (PEP) to the 5-hydroxyl of shikimate-3-phosphate (S3P) to produce enolpyruvyl shikimate-3-phosphate and inorganic phosphate. This Listeria monocytogenes serovar 1/2a (strain ATCC BAA-679 / EGD-e) protein is 3-phosphoshikimate 1-carboxyvinyltransferase.